We begin with the raw amino-acid sequence, 65 residues long: Large ribosomal subunit protein uL29 (65 aa).

This sequence belongs to the universal ribosomal protein uL29 family.

This chain is Large ribosomal subunit protein uL29, found in Lactobacillus helveticus (strain DPC 4571).